The chain runs to 512 residues: D-alanine--D-alanyl carrier protein ligase (512 aa).

Position 152-153 (152-153 (TS)) interacts with ATP. Residue D199 participates in D-alanine binding. 294–299 (NAYGPT) is a binding site for ATP. V303 contributes to the D-alanine binding site. ATP-binding positions include D385, 397–400 (YGGR), and K499. K499 is a binding site for D-alanine.

Belongs to the ATP-dependent AMP-binding enzyme family. DltA subfamily.

It localises to the cytoplasm. The catalysed reaction is holo-[D-alanyl-carrier protein] + D-alanine + ATP = D-alanyl-[D-alanyl-carrier protein] + AMP + diphosphate. The protein operates within cell wall biogenesis; lipoteichoic acid biosynthesis. Its function is as follows. Catalyzes the first step in the D-alanylation of lipoteichoic acid (LTA), the activation of D-alanine and its transfer onto the D-alanyl carrier protein (Dcp) DltC. In an ATP-dependent two-step reaction, forms a high energy D-alanyl-AMP intermediate, followed by transfer of the D-alanyl residue as a thiol ester to the phosphopantheinyl prosthetic group of the Dcp. D-alanylation of LTA plays an important role in modulating the properties of the cell wall in Gram-positive bacteria, influencing the net charge of the cell wall. In Streptococcus pyogenes serotype M18 (strain MGAS8232), this protein is D-alanine--D-alanyl carrier protein ligase.